The following is a 171-amino-acid chain: 3-hydroxydecanoyl-[acyl-carrier-protein] dehydratase (171 aa).

His70 is an active-site residue.

This sequence belongs to the thioester dehydratase family. FabA subfamily. In terms of assembly, homodimer.

Its subcellular location is the cytoplasm. It carries out the reaction a (3R)-hydroxyacyl-[ACP] = a (2E)-enoyl-[ACP] + H2O. The enzyme catalyses (3R)-hydroxydecanoyl-[ACP] = (2E)-decenoyl-[ACP] + H2O. It catalyses the reaction (2E)-decenoyl-[ACP] = (3Z)-decenoyl-[ACP]. It functions in the pathway lipid metabolism; fatty acid biosynthesis. Functionally, necessary for the introduction of cis unsaturation into fatty acids. Catalyzes the dehydration of (3R)-3-hydroxydecanoyl-ACP to E-(2)-decenoyl-ACP and then its isomerization to Z-(3)-decenoyl-ACP. Can catalyze the dehydratase reaction for beta-hydroxyacyl-ACPs with saturated chain lengths up to 16:0, being most active on intermediate chain length. This Pseudomonas fluorescens (strain Pf0-1) protein is 3-hydroxydecanoyl-[acyl-carrier-protein] dehydratase.